We begin with the raw amino-acid sequence, 326 residues long: Tumor necrosis factor soluble receptor (326 aa).

The signal sequence occupies residues 1–16; the sequence is MFRLTLLLAYVACVYG. TNFR-Cys repeat units lie at residues 27–62, 63–104, 105–147, and 148–186; these read KCRGNDYEKDGLCCTSCPPGSYASRLCGPGSDTVCS, PCKN…DRVC, DCSA…VLCT, and KCPRYTYSDAVSSTETCTSSFNYISVEFNLYPVNDTSCT. 10 cysteine pairs are disulfide-bonded: Cys28–Cys39, Cys40–Cys53, Cys43–Cys61, Cys64–Cys79, Cys82–Cys96, Cys86–Cys104, Cys106–Cys120, Cys123–Cys146, Cys129–Cys149, and Cys164–Cys185. Asn66 is a glycosylation site (N-linked (GlcNAc...) asparagine; by host). N-linked (GlcNAc...) asparagine; by host glycans are attached at residues Asn181, Asn205, and Asn238.

Functionally, binds to TNF-alpha and beta. Probably prevents TNF to reach cellular target and thereby deampening the potential antiviral effects of the cytokine. This is Tumor necrosis factor soluble receptor from Oryctolagus cuniculus (Rabbit).